The sequence spans 282 residues: MWNISEVVFQLPTSSASDRVLQPLWDYLLLRHYTLISSPFFPVLLAFSSYIIFSVPFAVLDVLGEKAPLFKYKIQKDRRPTVGMMLRTLWTAVYNHLVFVLPAVLITNVVMPMPPLPTVAPTVWEMFSGGLGALLVFDTQYFLWHMVHHKNPHLYRWVHAIHHDYISPFSWSTQHLSGVELMTVGFWSNIDPILLKCHPLTVWTLTVYSIWMSVEDHIGYDLPFSPGHLVPFGLLGGAMAHDMHHQKPSSNFAPFFSHWDKIFGTAITVKLTQKSEKEKQVA.

Asparagine 3 carries N-linked (GlcNAc...) asparagine glycosylation. A run of 3 helical transmembrane segments spans residues phenylalanine 40–leucine 60, methionine 85–threonine 107, and phenylalanine 127–valine 147. The region spanning alanine 133–threonine 265 is the Fatty acid hydroxylase domain. The short motif at tryptophan 144–histidine 148 is the Histidine box-1 element. The Histidine box-2 motif lies at histidine 159–histidine 163. The Histidine box-3 motif lies at alanine 240 to glutamine 246.

Belongs to the sterol desaturase family. It depends on Fe cation as a cofactor.

Its subcellular location is the endoplasmic reticulum membrane. In terms of biological role, may catalyze the formation of 25-hydroxycholesterol from cholesterol. The chain is Cholesterol 25-hydroxylase-like protein 1, member 1 (ch25hl1.1) from Danio rerio (Zebrafish).